We begin with the raw amino-acid sequence, 373 residues long: Chaperone protein DnaJ (373 aa).

The J domain occupies 5 to 69 (DYYEVLGVNK…NKRVNYDQFG (65 aa)). The CR-type zinc finger occupies 130–212 (GTKKEISIKK…CKGKGTENKT (83 aa)). The Zn(2+) site is built by C143, C146, C160, C163, C186, C189, C200, and C203. CXXCXGXG motif repeat units follow at residues 143-150 (CHTCNGDG), 160-167 (CSYCNGAG), 186-193 (CPKCEGSG), and 200-207 (CPTCKGKG).

Belongs to the DnaJ family. As to quaternary structure, homodimer. Zn(2+) serves as cofactor.

The protein localises to the cytoplasm. Functionally, participates actively in the response to hyperosmotic and heat shock by preventing the aggregation of stress-denatured proteins and by disaggregating proteins, also in an autonomous, DnaK-independent fashion. Unfolded proteins bind initially to DnaJ; upon interaction with the DnaJ-bound protein, DnaK hydrolyzes its bound ATP, resulting in the formation of a stable complex. GrpE releases ADP from DnaK; ATP binding to DnaK triggers the release of the substrate protein, thus completing the reaction cycle. Several rounds of ATP-dependent interactions between DnaJ, DnaK and GrpE are required for fully efficient folding. Also involved, together with DnaK and GrpE, in the DNA replication of plasmids through activation of initiation proteins. This Staphylococcus epidermidis (strain ATCC 35984 / DSM 28319 / BCRC 17069 / CCUG 31568 / BM 3577 / RP62A) protein is Chaperone protein DnaJ.